A 448-amino-acid chain; its full sequence is Homogentisate 1,2-dioxygenase (448 aa).

The Proton acceptor role is filled by histidine 303. Positions 346 and 352 each coordinate Fe cation. 2 residues coordinate homogentisate: tyrosine 361 and histidine 382. Histidine 382 serves as a coordination point for Fe cation.

This sequence belongs to the homogentisate dioxygenase family. As to quaternary structure, hexamer; dimer of trimers. It depends on Fe cation as a cofactor.

The enzyme catalyses homogentisate + O2 = 4-maleylacetoacetate + H(+). Its pathway is amino-acid degradation; L-phenylalanine degradation; acetoacetate and fumarate from L-phenylalanine: step 4/6. Involved in the catabolism of homogentisate (2,5-dihydroxyphenylacetate or 2,5-OH-PhAc), a central intermediate in the degradation of phenylalanine and tyrosine. Catalyzes the oxidative ring cleavage of the aromatic ring of homogentisate to yield maleylacetoacetate. The chain is Homogentisate 1,2-dioxygenase from Bradyrhizobium diazoefficiens (strain JCM 10833 / BCRC 13528 / IAM 13628 / NBRC 14792 / USDA 110).